The primary structure comprises 176 residues: Inner membrane-spanning protein YciB (176 aa).

6 helical membrane passes run 3 to 23 (FLFD…WGIF), 24 to 44 (TATA…AFRH), 49 to 69 (TMLW…LVLH), 81 to 101 (LYWL…NNLI), 121 to 141 (VAWA…VHNF), and 149 to 169 (FKLF…SLWL).

This sequence belongs to the YciB family.

The protein localises to the cell inner membrane. Plays a role in cell envelope biogenesis, maintenance of cell envelope integrity and membrane homeostasis. This Burkholderia lata (strain ATCC 17760 / DSM 23089 / LMG 22485 / NCIMB 9086 / R18194 / 383) protein is Inner membrane-spanning protein YciB.